A 316-amino-acid polypeptide reads, in one-letter code: Nucleotide-binding protein NFA_35930 (316 aa).

Position 32–39 (32–39 (GLSGAGRG)) interacts with ATP. GTP is bound at residue 83 to 86 (DVRS).

Belongs to the RapZ-like family.

Its function is as follows. Displays ATPase and GTPase activities. This Nocardia farcinica (strain IFM 10152) protein is Nucleotide-binding protein NFA_35930.